Reading from the N-terminus, the 502-residue chain is Probable malate:quinone oxidoreductase 1 (502 aa).

The protein belongs to the MQO family. FAD is required as a cofactor.

It carries out the reaction (S)-malate + a quinone = a quinol + oxaloacetate. Its pathway is carbohydrate metabolism; tricarboxylic acid cycle; oxaloacetate from (S)-malate (quinone route): step 1/1. The protein is Probable malate:quinone oxidoreductase 1 of Pseudomonas putida (strain ATCC 47054 / DSM 6125 / CFBP 8728 / NCIMB 11950 / KT2440).